Reading from the N-terminus, the 368-residue chain is Aminomethyltransferase (368 aa).

It belongs to the GcvT family. The glycine cleavage system is composed of four proteins: P, T, L and H.

It catalyses the reaction N(6)-[(R)-S(8)-aminomethyldihydrolipoyl]-L-lysyl-[protein] + (6S)-5,6,7,8-tetrahydrofolate = N(6)-[(R)-dihydrolipoyl]-L-lysyl-[protein] + (6R)-5,10-methylene-5,6,7,8-tetrahydrofolate + NH4(+). The glycine cleavage system catalyzes the degradation of glycine. This chain is Aminomethyltransferase, found in Thermoanaerobacter sp. (strain X514).